The sequence spans 118 residues: U16-barytoxin-Tl1c (118 aa).

The N-terminal stretch at 1–16 (MKTIIVFLSFLVLVLA) is a signal peptide. Positions 17 to 76 (TKFGDANEGVNREQTKEVIQNEFRGDFLNEMAAMSLLQQLEAIESALLEKEADRNSRQKR) are excised as a propeptide. Cystine bridges form between Cys-77/Cys-92, Cys-84/Cys-97, and Cys-91/Cys-112.

It belongs to the neurotoxin 14 (magi-1) family. 06 (ICK-Trit) subfamily. As to expression, expressed by the venom gland.

Its subcellular location is the secreted. Functionally, ion channel inhibitor. This is U16-barytoxin-Tl1c from Trittame loki (Brush-footed trapdoor spider).